Reading from the N-terminus, the 354-residue chain is Small ribosomal subunit protein uS2 (354 aa).

Belongs to the universal ribosomal protein uS2 family.

The polypeptide is Small ribosomal subunit protein uS2 (Methylorubrum populi (strain ATCC BAA-705 / NCIMB 13946 / BJ001) (Methylobacterium populi)).